The following is an 810-amino-acid chain: Janus kinase and microtubule-interacting protein 2 (810 aa).

3 coiled-coil regions span residues 13–102, 148–178, and 207–244; these read EALI…EMSR, ERLKLLQEIADLKTAKKQVDEALSNMIQADK, and RRLMDEIKAKDRIIFSLEKELETQTGYVQKLQLQKEAL. Positions 261-274 are enriched in basic and acidic residues; sequence PKREIPGRAGDGSE. Disordered stretches follow at residues 261–280 and 437–465; these read PKREIPGRAGDGSEHCSSPD and YDEDSMDSETSSMASFRTDRTPATPDDDL. Residues 280–419 adopt a coiled-coil conformation; that stretch reads DLRRNQKRIA…REKLIRRRKH (140 aa). Coiled-coil stretches lie at residues 468–597 and 664–808; these read SLAA…RERR and EKWI…SNRK.

It belongs to the JAKMIP family. As to expression, highly expressed in brain, moderately expressed in thymus, spleen and lung, and weakly expressed in kidney, liver and peripheral blood lymphocytes. Also expressed in adrenal and pituitary glands, as well as testis.

The protein resides in the golgi apparatus. This Homo sapiens (Human) protein is Janus kinase and microtubule-interacting protein 2 (JAKMIP2).